The primary structure comprises 341 residues: MKALSKLKAEEGIWMTDVPEPEVGHNDLLIKIRKTAICGTDVHIYNWDDWSQKTIPVPMVVGHEYVGEVVGIGQEVKGFKIGDRVSGEGHITCGHCRNCRGGRTHLCRNTTGVGVNRPGCFAEYLVIPAFNAFKIPDNISDDLASIFDPFGNAVHTALSFDLVGEDVLVSGAGPIGVMAAAVAKHVGARHVVITDVNEYRLELARKMGVTRAVNVAKESLNDVMAELGMTEGFDVGLEMSGAPPAFRTMLDTMNHGGRIAMLGIPPSDMSIDWTKVIFKGLFIKGIYGREMFETWYKMAALIQSGLDLSPIITHRFSIDDFQKGFDAMRSGQSGKVILSWD.

Cys38 contributes to the Zn(2+) binding site. Catalysis depends on charge relay system residues Thr40 and His43. The Zn(2+) site is built by His63, Glu64, Cys93, Cys96, Cys99, and Cys107. Residues Ile175, Asp195, Arg200, 262 to 264, and 286 to 287 contribute to the NAD(+) site; these read LGI and IY.

This sequence belongs to the zinc-containing alcohol dehydrogenase family. In terms of assembly, homotetramer. Zn(2+) is required as a cofactor.

The protein resides in the cytoplasm. It carries out the reaction L-threonine + NAD(+) = (2S)-2-amino-3-oxobutanoate + NADH + H(+). It participates in amino-acid degradation; L-threonine degradation via oxydo-reductase pathway; glycine from L-threonine: step 1/2. Catalyzes the NAD(+)-dependent oxidation of L-threonine to 2-amino-3-ketobutyrate. This chain is L-threonine 3-dehydrogenase, found in Salmonella choleraesuis (strain SC-B67).